A 359-amino-acid chain; its full sequence is 3-dehydroquinate synthase (359 aa).

NAD(+) is bound by residues 70 to 75, 104 to 108, 128 to 129, lysine 141, and lysine 150; these read DAEGGK, GAATD, and TT. Zn(2+)-binding residues include glutamate 183, histidine 246, and histidine 262.

This sequence belongs to the sugar phosphate cyclases superfamily. Dehydroquinate synthase family. It depends on Co(2+) as a cofactor. Zn(2+) serves as cofactor. NAD(+) is required as a cofactor.

The protein resides in the cytoplasm. The enzyme catalyses 7-phospho-2-dehydro-3-deoxy-D-arabino-heptonate = 3-dehydroquinate + phosphate. The protein operates within metabolic intermediate biosynthesis; chorismate biosynthesis; chorismate from D-erythrose 4-phosphate and phosphoenolpyruvate: step 2/7. Catalyzes the conversion of 3-deoxy-D-arabino-heptulosonate 7-phosphate (DAHP) to dehydroquinate (DHQ). The polypeptide is 3-dehydroquinate synthase (Mycolicibacterium vanbaalenii (strain DSM 7251 / JCM 13017 / BCRC 16820 / KCTC 9966 / NRRL B-24157 / PYR-1) (Mycobacterium vanbaalenii)).